The following is a 1259-amino-acid chain: Lysine-specific demethylase 2B (1259 aa).

In terms of domain architecture, JmjC spans 147–315 (FSHTKLERVV…MQLRVFEIED (169 aa)). Residue Thr208 participates in substrate binding. Positions 211 and 213 each coordinate Fe cation. Lys228 lines the substrate pocket. Fe cation is bound at residue His283. Residues 388-402 (EEKGNLVEKPSKQSG) show a composition bias toward basic and acidic residues. Disordered regions lie at residues 388–463 (EEKG…ATDM) and 536–562 (KPSKNRAVGRPKGKIASSPAVKLSANR). Residues 403-413 (DESSTTNSTHS) show a composition bias toward polar residues. Residues 414 to 423 (NGKDAAEKKQ) are compositionally biased toward basic and acidic residues. The span at 426-437 (TLMQQLKRTLSN) shows a compositional bias: polar residues. Basic residues predominate over residues 536–548 (KPSKNRAVGRPKG). Residues 567–613 (ARRRRTRCRKCEACLRTECGECHFCKDMKKFGGPGRMKQSCIMRQCI) form a CXXC-type zinc finger. Cys574, Cys577, Cys580, Cys585, Cys588, Cys591, Cys607, Cys612, Cys623, Cys626, Cys649, Cys652, His657, Cys660, Cys680, and Cys683 together coordinate Zn(2+). The PHD-type zinc-finger motif lies at 620-686 (TAVCLVCGEA…CWECPKCNHA (67 aa)). Basic and acidic residues-rich tracts occupy residues 729-763 (KKKVEREETPKQIPEEQPKKKPTEGIIKKKPEDGH) and 771-790 (EKPPDPSVRKRLKLVKEEKL). The segment at 729–958 (KKKVEREETP…PPPSLSPPKC (230 aa)) is disordered. Residues 835–848 (SRSSSPTAGPSTEG) show a composition bias toward polar residues. The span at 854–863 (KKKIRRKRRV) shows a compositional bias: basic residues. The span at 864-877 (SNKELSKELSKELN) shows a compositional bias: basic and acidic residues. The stretch at 864 to 891 (SNKELSKELSKELNQEIQKTESSLASEN) forms a coiled coil. Residues 878 to 889 (QEIQKTESSLAS) show a composition bias toward polar residues. The segment covering 890–908 (ENHHPIKSEPESDNEESKK) has biased composition (basic and acidic residues). The 46-residue stretch at 985–1030 (AHVMQREVWMAIFSYLSHRDLCICMRICRTWNRWCCDKRLWTQIDL) folds into the F-box domain. LRR repeat units follow at residues 1056 to 1081 (WTNISKKQLSWLINRLPALRDLNLSG), 1082 to 1105 (CSWIAVSALCSSCCPLLRTLNVQW), 1145 to 1170 (GLDITDASLRLMIRHMPLLAKLDLSY), 1171 to 1200 (CNHVTDQSINLLTAVGTSTRDTLLEMNLSD), and 1201 to 1225 (CNNVTDQCLTFFKRCGNICLIDLRF).

This sequence belongs to the JHDM1 histone demethylase family. Fe(2+) is required as a cofactor.

It is found in the nucleus. The protein resides in the nucleolus. It localises to the chromosome. It catalyses the reaction N(6),N(6)-dimethyl-L-lysyl(36)-[histone H3] + 2 2-oxoglutarate + 2 O2 = L-lysyl(36)-[histone H3] + 2 formaldehyde + 2 succinate + 2 CO2. Histone demethylase activity is inhibited by fumarate. Functionally, histone demethylase that demethylates 'Lys-4' and 'Lys-36' of histone H3, thereby playing a central role in histone code. Preferentially demethylates trimethylated H3 'Lys-4' and dimethylated H3 'Lys-36' residue while it has weak or no activity for mono- and tri-methylated H3 'Lys-36'. Preferentially binds the transcribed region of ribosomal RNA and represses the transcription of ribosomal RNA genes which inhibits cell growth and proliferation. This Xenopus laevis (African clawed frog) protein is Lysine-specific demethylase 2B (kdm2b).